A 258-amino-acid chain; its full sequence is Pimeloyl-[acyl-carrier protein] methyl ester esterase (258 aa).

Positions Leu-16–Pro-242 constitute an AB hydrolase-1 domain. Substrate-binding positions include Trp-22, Ser-82–Met-83, and Phe-143–Gln-147. The Nucleophile role is filled by Ser-82. Catalysis depends on residues Asp-207 and His-235. His-235 lines the substrate pocket.

The protein belongs to the AB hydrolase superfamily. Carboxylesterase BioH family. In terms of assembly, monomer.

The protein localises to the cytoplasm. It catalyses the reaction 6-carboxyhexanoyl-[ACP] methyl ester + H2O = 6-carboxyhexanoyl-[ACP] + methanol + H(+). It participates in cofactor biosynthesis; biotin biosynthesis. Functionally, the physiological role of BioH is to remove the methyl group introduced by BioC when the pimeloyl moiety is complete. It allows to synthesize pimeloyl-ACP via the fatty acid synthetic pathway through the hydrolysis of the ester bonds of pimeloyl-ACP esters. The chain is Pimeloyl-[acyl-carrier protein] methyl ester esterase from Yersinia pseudotuberculosis serotype O:1b (strain IP 31758).